We begin with the raw amino-acid sequence, 200 residues long: Small ribosomal subunit protein eS8A (200 aa).

Residues 1–31 (MGISRDSRHKRSATGAKRAQFRKKRKFELGR) are disordered. At Thr62 the chain carries Phosphothreonine. Phosphoserine occurs at positions 66, 69, 73, and 86. Thr107 bears the Phosphothreonine mark. Residues Ser154, Ser155, Ser158, and Ser161 each carry the phosphoserine modification.

It belongs to the eukaryotic ribosomal protein eS8 family. In terms of assembly, component of the small ribosomal subunit (SSU). Mature yeast ribosomes consist of a small (40S) and a large (60S) subunit. The 40S small subunit contains 1 molecule of ribosomal RNA (18S rRNA) and 33 different proteins (encoded by 57 genes). The large 60S subunit contains 3 rRNA molecules (25S, 5.8S and 5S rRNA) and 46 different proteins (encoded by 81 genes).

It is found in the cytoplasm. Functionally, component of the ribosome, a large ribonucleoprotein complex responsible for the synthesis of proteins in the cell. The small ribosomal subunit (SSU) binds messenger RNAs (mRNAs) and translates the encoded message by selecting cognate aminoacyl-transfer RNA (tRNA) molecules. The large subunit (LSU) contains the ribosomal catalytic site termed the peptidyl transferase center (PTC), which catalyzes the formation of peptide bonds, thereby polymerizing the amino acids delivered by tRNAs into a polypeptide chain. The nascent polypeptides leave the ribosome through a tunnel in the LSU and interact with protein factors that function in enzymatic processing, targeting, and the membrane insertion of nascent chains at the exit of the ribosomal tunnel. The polypeptide is Small ribosomal subunit protein eS8A (Saccharomyces cerevisiae (strain ATCC 204508 / S288c) (Baker's yeast)).